The primary structure comprises 635 residues: Probable extracellular metalloproteinase 1 (635 aa).

The signal sequence occupies residues M1 to A19. Positions H20–H246 are excised as a propeptide. The N-linked (GlcNAc...) asparagine glycan is linked to N287. H430 lines the Zn(2+) pocket. Residue E431 is part of the active site. H434 lines the Zn(2+) pocket. Residues N475, N594, and N623 are each glycosylated (N-linked (GlcNAc...) asparagine).

Belongs to the peptidase M36 family. Zn(2+) serves as cofactor.

Its subcellular location is the secreted. Functionally, secreted metalloproteinase probably acting as a virulence factor. The chain is Probable extracellular metalloproteinase 1 (MEP1) from Trichophyton verrucosum (strain HKI 0517).